We begin with the raw amino-acid sequence, 528 residues long: DnaJ homolog 1, mitochondrial (528 aa).

The N-terminal 66 residues, 1-66 (MFSKYLQSRV…REFSRCAALK (66 aa)), are a transit peptide targeting the mitochondrion. Positions 86–150 (DPYKTLGVSK…KKKKAFDTYG (65 aa)) constitute a J domain. The CR-type zinc-finger motif lies at 227–308 (GAKKDLSYSV…CMGSGTVRER (82 aa)). CXXCXGXG motif repeat units follow at residues 240 to 247 (CSSCHGSG), 257 to 264 (CFACKGTG), 280 to 287 (CDSCGGTG), and 296 to 303 (CRSCMGSG). The disordered stretch occupies residues 455-528 (NDSTARRTQS…QNPKKDESSS (74 aa)). A compositionally biased stretch (low complexity) spans 462–488 (TQSSPSGTNSSTSTSSTSSKHSTGIST). Residues 513–528 (LHPDEDQNPKKDESSS) are compositionally biased toward basic and acidic residues.

Its subcellular location is the mitochondrion. The protein is DnaJ homolog 1, mitochondrial (mdj1) of Schizosaccharomyces pombe (strain 972 / ATCC 24843) (Fission yeast).